Here is a 296-residue protein sequence, read N- to C-terminus: Chronophin (296 aa).

D25 serves as the catalytic Nucleophile. Residues D25 and D27 each contribute to the Mg(2+) site. D27 acts as the Proton donor in catalysis. Substrate-binding positions include 58–60 (SNN), H182, and K213. D238 contributes to the Mg(2+) binding site.

This sequence belongs to the HAD-like hydrolase superfamily. As to quaternary structure, homodimer. It depends on Mg(2+) as a cofactor. As to expression, ubiquitously expressed (at protein level). Highly expressed in all the regions of central nerve system except the spinal cord. Also expressed at high level in liver and testis. In fetus, it is weakly expressed in all organs except brain.

It localises to the cytoplasm. The protein resides in the cytosol. The protein localises to the cytoskeleton. It is found in the cell projection. Its subcellular location is the ruffle membrane. It localises to the lamellipodium membrane. The protein resides in the cell membrane. The enzyme catalyses pyridoxal 5'-phosphate + H2O = pyridoxal + phosphate. It catalyses the reaction pyridoxine 5'-phosphate + H2O = pyridoxine + phosphate. The catalysed reaction is pyridoxamine + phosphate = pyridoxamine 5'-phosphate + H2O. It carries out the reaction O-phospho-L-seryl-[protein] + H2O = L-seryl-[protein] + phosphate. Inhibited by NaF, Zn(2+), Ca(2+), Mn(2+) and EDTA. In terms of biological role, functions as a pyridoxal phosphate (PLP) phosphatase, which also catalyzes the dephosphorylation of pyridoxine 5'-phosphate (PNP) and pyridoxamine 5'-phosphate (PMP), with order of substrate preference PLP &gt; PNP &gt; PMP and therefore plays a role in vitamin B6 metabolism. Also functions as a protein serine phosphatase that specifically dephosphorylates 'Ser-3' in proteins of the actin-depolymerizing factor (ADF)/cofilin family like CFL1 and DSTN. Thereby, regulates cofilin-dependent actin cytoskeleton reorganization, being required for normal progress through mitosis and normal cytokinesis. Does not dephosphorylate phosphothreonines in LIMK1. Does not dephosphorylate peptides containing phosphotyrosine. The polypeptide is Chronophin (Homo sapiens (Human)).